Here is a 139-residue protein sequence, read N- to C-terminus: Large ribosomal subunit protein uL16 (139 aa).

The protein belongs to the universal ribosomal protein uL16 family. In terms of assembly, part of the 50S ribosomal subunit.

Binds 23S rRNA and is also seen to make contacts with the A and possibly P site tRNAs. This Neorickettsia sennetsu (strain ATCC VR-367 / Miyayama) (Ehrlichia sennetsu) protein is Large ribosomal subunit protein uL16 (rplP).